The primary structure comprises 92 residues: Small ribosomal subunit protein uS19 (92 aa).

This sequence belongs to the universal ribosomal protein uS19 family.

In terms of biological role, protein S19 forms a complex with S13 that binds strongly to the 16S ribosomal RNA. The protein is Small ribosomal subunit protein uS19 of Streptococcus agalactiae serotype Ia (strain ATCC 27591 / A909 / CDC SS700).